Reading from the N-terminus, the 349-residue chain is Inhibitor of nuclear factor kappa-B kinase-interacting protein (349 aa).

Over residues 1–11 (MSEVKSRKKSG) the composition is skewed to basic residues. Residues 1–39 (MSEVKSRKKSGTKGAPAEPGKRNEGGKSPEARGGGGRGW) are disordered. Residues 19–30 (PGKRNEGGKSPE) are compositionally biased toward basic and acidic residues. Residues 45–61 (GVSLLSLGTCLGLAWFV) traverse the membrane as a helical segment. N145 carries an N-linked (GlcNAc...) asparagine glycan. Coiled-coil stretches lie at residues 183-216 (GLVT…IGDL) and 304-347 (IGRL…HISD). The N-linked (GlcNAc...) asparagine glycan is linked to N327.

Post-translationally, N-glycosylated.

Its subcellular location is the endoplasmic reticulum membrane. In terms of biological role, target of p53/TP53 with pro-apoptotic function. The sequence is that of Inhibitor of nuclear factor kappa-B kinase-interacting protein (IKBIP) from Bos taurus (Bovine).